Here is an 83-residue protein sequence, read N- to C-terminus: Sec-independent protein translocase protein TatA (83 aa).

Residues 1–21 traverse the membrane as a helical segment; sequence MGNMGIWQLLIIAVIVILLFG. Basic and acidic residues-rich tracts occupy residues 47-57 and 71-83; these read EEKKALEETAS and AEKK…KEQV. A disordered region spans residues 47–83; that stretch reads EEKKALEETASEKATPSVEKTAPNAEKKTETKDKEQV.

It belongs to the TatA/E family. In terms of assembly, the Tat system comprises two distinct complexes: a TatABC complex, containing multiple copies of TatA, TatB and TatC subunits, and a separate TatA complex, containing only TatA subunits. Substrates initially bind to the TatABC complex, which probably triggers association of the separate TatA complex to form the active translocon.

It localises to the cell inner membrane. In terms of biological role, part of the twin-arginine translocation (Tat) system that transports large folded proteins containing a characteristic twin-arginine motif in their signal peptide across membranes. TatA could form the protein-conducting channel of the Tat system. The sequence is that of Sec-independent protein translocase protein TatA from Shewanella woodyi (strain ATCC 51908 / MS32).